We begin with the raw amino-acid sequence, 460 residues long: N-lysine methyltransferase setd6 (460 aa).

One can recognise an SET domain in the interval 28–265 (ESVQLTLSDK…KGEEVFNTYG (238 aa)).

Belongs to the class V-like SAM-binding methyltransferase superfamily. Histone-lysine methyltransferase family. SETD6 subfamily.

It is found in the nucleus. Protein-lysine N-methyltransferase. The protein is N-lysine methyltransferase setd6 (setd6) of Danio rerio (Zebrafish).